A 331-amino-acid chain; its full sequence is 6-phosphogluconolactonase (331 aa).

Position 287 is an N6-acetyllysine (Lys-287).

The protein belongs to the cycloisomerase 2 family.

It carries out the reaction 6-phospho-D-glucono-1,5-lactone + H2O = 6-phospho-D-gluconate + H(+). It functions in the pathway carbohydrate degradation; pentose phosphate pathway; D-ribulose 5-phosphate from D-glucose 6-phosphate (oxidative stage): step 2/3. Its function is as follows. Catalyzes the hydrolysis of 6-phosphogluconolactone to 6-phosphogluconate. The protein is 6-phosphogluconolactonase of Escherichia coli O127:H6 (strain E2348/69 / EPEC).